The primary structure comprises 341 residues: HTH-type transcriptional repressor PurR (341 aa).

The HTH lacI-type domain occupies 2 to 56 (ATIKDVAKRANVSTTTVSHVINKTRFVAEETRNAVWAAIKELHYSPSAVARSLKV). The H-T-H motif DNA-binding region spans 4–23 (IKDVAKRANVSTTTVSHVIN). The DNA-binding element occupies 48-56 (SAVARSLKV). 5 residues coordinate hypoxanthine: Tyr-73, Arg-190, Thr-192, Phe-221, and Asp-275.

As to quaternary structure, homodimer.

The protein operates within purine metabolism; purine nucleotide biosynthesis [regulation]. In terms of biological role, is the main repressor of the genes involved in the de novo synthesis of purine nucleotides, regulating purB, purC, purEK, purF, purHD, purL, purMN and guaBA expression. In addition, it participates in the regulation or coregulation of genes involved in de novo pyrimidine nucleotide biosynthesis, salvage and uptake (pyrC, pyrD, carAB and codBA), and of several genes encoding enzymes necessary for nucleotide and polyamine biosynthesis (prsA, glyA, gcvTHP, speA, glnB). Binds to a 16-bp palindromic sequence located within the promoter region of pur regulon genes. The consensus binding sequence is 5'-ACGCAAACGTTTTCNT-3'. PurR is allosterically activated to bind its cognate DNA by binding the purine corepressors, hypoxanthine or guanine, thereby effecting transcription repression. In Escherichia coli (strain K12), this protein is HTH-type transcriptional repressor PurR (purR).